Here is a 325-residue protein sequence, read N- to C-terminus: Ribose-phosphate pyrophosphokinase 4 (325 aa).

Aspartate 145 and histidine 147 together coordinate Mg(2+). Positions 228–243 are binding of phosphoribosylpyrophosphate; sequence GRHVVIVDDLVQSGGT.

It belongs to the ribose-phosphate pyrophosphokinase family. The cofactor is Mg(2+).

The catalysed reaction is D-ribose 5-phosphate + ATP = 5-phospho-alpha-D-ribose 1-diphosphate + AMP + H(+). This Oryza sativa subsp. japonica (Rice) protein is Ribose-phosphate pyrophosphokinase 4.